The sequence spans 1409 residues: Protein three rows (1409 aa).

The separase cleavage-site stretch occupies residues valine 1052–glutamine 1058. Disordered regions lie at residues proline 1260–valine 1284 and aspartate 1297–asparagine 1409. Low complexity-rich tracts occupy residues serine 1264–serine 1273 and alanine 1300–serine 1310.

In terms of assembly, interacts with pim and Sse. Cleavage of thr contributes to inactivation of Sse.

It is found in the cytoplasm. Required specifically for chromosome disjunction during all mitoses; maternally provided protein is sufficient until mitosis 14 then zygotic protein is required. Involved in formation and/or maintenance of epithelial structures: bud extension during Malpighian tubule development, and foregut and hindgut morphogenesis. The polypeptide is Protein three rows (thr) (Drosophila pseudoobscura pseudoobscura (Fruit fly)).